A 428-amino-acid chain; its full sequence is Homoserine dehydrogenase (428 aa).

NADPH contacts are provided by phenylalanine 10, threonine 12, valine 13, arginine 44, and lysine 106. NAD(+) is bound at residue valine 13. NADP(+) contacts are provided by valine 13, arginine 44, and lysine 106. Na(+) contacts are provided by glutamate 130, valine 133, glycine 135, and isoleucine 137. Residues glycine 188 and glutamate 191 each coordinate NADP(+). 2 residues coordinate L-homoserine: glutamate 191 and aspartate 202. Lysine 206 acts as the Proton donor in catalysis. Position 303 (glycine 303) interacts with NADPH. Glycine 303 is a binding site for NAD(+). Glycine 303 is a binding site for NADP(+). One can recognise an ACT domain in the interval 351–425 (YFSVETPDST…DFKLLNYFKV (75 aa)).

This sequence belongs to the homoserine dehydrogenase family. A metal cation is required as a cofactor.

It carries out the reaction L-homoserine + NADP(+) = L-aspartate 4-semialdehyde + NADPH + H(+). It catalyses the reaction L-homoserine + NAD(+) = L-aspartate 4-semialdehyde + NADH + H(+). Its pathway is amino-acid biosynthesis; L-methionine biosynthesis via de novo pathway; L-homoserine from L-aspartate: step 3/3. It functions in the pathway amino-acid biosynthesis; L-threonine biosynthesis; L-threonine from L-aspartate: step 3/5. Functionally, catalyzes the conversion of L-aspartate-beta-semialdehyde (L-Asa) to L-homoserine (L-Hse), the third step in the biosynthesis of threonine and methionine from aspartate. In Lactococcus lactis subsp. lactis (strain IL1403) (Streptococcus lactis), this protein is Homoserine dehydrogenase (hom).